The primary structure comprises 1358 residues: MSDEFNGLDGLSDELLSAERKLDILTQFKAHVKKTLVNEQVCVKYFENLSRLLVERGSNRRRGNDGDDVVFALAHSALCYLIKRVAMQAQHKFQHDLIELIVSTLFSIPFADKKVWQSSVKALEAIYLAKPNEFCQVLNESIAYNGSIRTNVLLLIDELARMESSNGRNGSMFLQKFIPFWVQEMNTNDSISNTDIELIYDIVANRCPEPMVRSMVDSVIRESAAKVFKSRLVGKLNNHGSESDMKDDFDRSITHTNSINSQVFNLQNELQSIMHQAPQFPTVPAPEPISYSNLSYLIKDLESMLPAFEGSRETEQNWKIRQTNVTKLRSIVLGNVSIEFPDKFLELWKDLNLQYCVTKSALSLRTSLCTHGCSLVKDLCCVFNSMLDISIIENLWSCLAKLMSNTKKIANQNAFICLITLLSTVPFHSRLFNHCFALIRDKNNVSRLYSSTFLRILIVRFHKRLISQHHVYVEEWLQKGLTDAQTTIRESMRITFWYWFKVSPMSGKKMLNLFQPQIKRALENSIPTHLDINYEAAIPPQSKESSRRSSLLPKRFPSYAAPTQSSHLPRSSIKRSLTDLAQGTQSFSKRSLRTPPDHDMNIDLTSELTNSQTNPLLNRYMKREEVEPEPLHVILSKDPKLGLDLLQKYLLSDTKIGDEEKVQSAIVSLIRTNPKAFKPLLHLPKFYQLIPLNFSMVLLPLNDLDISMIETQFKTYDIINNVISILQSLEDKNSEWSIFYVRFKYQIYNFCFNTIAKMLNTVTLSDQLINELINACGKDMDAEKYYKLILNIYLADKTKFVRLLKSTSTASTKLKIANVIQKKDSEFKIKSILNYPSVPEPIVSPEEHHLLEMTMVNPLGKRTVSSNTVIHNSLEGLDESESNPNIIADEDNHSEKEDLVTVPPVAKNSVNTVSFVADSPSDSDNDDTKKNGSDVVDHEEIRDHEESHGFTKFGGFSKLTEMTKVHSVFQPETVDENVDPMEVDSPDESNLDQKSLLTDIFLKNQHQEGSVSPIFKPQELNNDPRHDYDSDMLSDAINGIEIKTNDGSVANRSEDDIKTLGTNMGSVSDPKTFKPINLAHFANDSLFSFELKFIDASIGIVNLTQLKLIVQSIINNGTFKMNELQYILKCFLCYDQEVLEWIHDQHELKDVWAITELLLSSSSSESQIPTNIAYKSIILTACLLTIDDELEHTVLKDSSISQLFEHIISLVAKLDTFENEIYFACTELRTLLLSQDNNKHLPSFLEKCLKALCDTKEQYIVKISFLLETINGIISSMGNLLSVDVLRDLAKTISRYTPSDVAEWRFASCTALATIYSQLISRSTPVGYIRSLMPLLDPSDFEVVRSLSTTKDATRRLG.

Disordered regions lie at residues Phe-915–Phe-950 and Gln-970–Asn-990. A compositionally biased stretch (basic and acidic residues) spans Asp-926–Gly-949. Over residues Thr-973–Asn-990 the composition is skewed to acidic residues.

Belongs to the CLASP family. As to quaternary structure, interacts with microtubules.

The protein localises to the cytoplasm. Its subcellular location is the cytoskeleton. It is found in the nucleus. The protein resides in the spindle. Microtubule binding protein that promotes the stabilization of dynamic microtubules. Required for mitotic spindle formation. This Kluyveromyces lactis (strain ATCC 8585 / CBS 2359 / DSM 70799 / NBRC 1267 / NRRL Y-1140 / WM37) (Yeast) protein is Protein STU1 (STU1).